We begin with the raw amino-acid sequence, 611 residues long: Dihydroxy-acid dehydratase (611 aa).

Position 81 (aspartate 81) interacts with Mg(2+). Residue cysteine 122 participates in [2Fe-2S] cluster binding. Mg(2+) contacts are provided by aspartate 123 and lysine 124. Lysine 124 is subject to N6-carboxylysine. Cysteine 195 is a [2Fe-2S] cluster binding site. Mg(2+) is bound at residue glutamate 491. Residue serine 517 is the Proton acceptor of the active site.

This sequence belongs to the IlvD/Edd family. As to quaternary structure, homodimer. [2Fe-2S] cluster is required as a cofactor. Mg(2+) serves as cofactor.

The enzyme catalyses (2R)-2,3-dihydroxy-3-methylbutanoate = 3-methyl-2-oxobutanoate + H2O. It carries out the reaction (2R,3R)-2,3-dihydroxy-3-methylpentanoate = (S)-3-methyl-2-oxopentanoate + H2O. It functions in the pathway amino-acid biosynthesis; L-isoleucine biosynthesis; L-isoleucine from 2-oxobutanoate: step 3/4. The protein operates within amino-acid biosynthesis; L-valine biosynthesis; L-valine from pyruvate: step 3/4. Functionally, functions in the biosynthesis of branched-chain amino acids. Catalyzes the dehydration of (2R,3R)-2,3-dihydroxy-3-methylpentanoate (2,3-dihydroxy-3-methylvalerate) into 2-oxo-3-methylpentanoate (2-oxo-3-methylvalerate) and of (2R)-2,3-dihydroxy-3-methylbutanoate (2,3-dihydroxyisovalerate) into 2-oxo-3-methylbutanoate (2-oxoisovalerate), the penultimate precursor to L-isoleucine and L-valine, respectively. This chain is Dihydroxy-acid dehydratase, found in Allorhizobium ampelinum (strain ATCC BAA-846 / DSM 112012 / S4) (Agrobacterium vitis (strain S4)).